We begin with the raw amino-acid sequence, 619 residues long: Bifunctional glutathionylspermidine synthetase/amidase (619 aa).

A gsp amidase region spans residues 2–195 (SKGTTSQDAP…LGWMIQTEDT (194 aa)). The region spanning 34–176 (DPQEYEDDAV…MVVENGCYTL (143 aa)) is the Peptidase C51 domain. A glutathionylspermidine-binding site is contributed by Q58. Residue C59 is the S-(gamma-glutamyl-cysteinyl-glycyl)-cysteine intermediate of the active site. Position 59 is a cysteine sulfenic acid (-SOH); transient (C59). Glutathionylspermidine contacts are provided by residues R64, 78–81 (VGMA), and N149. A linker region spans residues 196-205 (EYSLPQPEIA). Positions 206-619 (GELLKISGAR…DIEPLIVVKK (414 aa)) are gsp synthetase. R316 is a glutathione binding site. 316-318 (RMD) serves as a coordination point for ATP. Residues D318, E330, and N332 each contribute to the Mg(2+) site. A glutathione-binding site is contributed by S335. E391 is a spermidine binding site. 2 residues coordinate glutathione: E392 and T446. ATP is bound by residues K498, K533, 539-540 (CG), 568-571 (QQLW), Q582, and 603-605 (LVI). Position 610 (D610) interacts with spermidine.

In the C-terminal section; belongs to the glutathionylspermidine synthase preATP-grasp family. As to quaternary structure, homodimer. Oxidation of Cys-59 to sulfenic acid during oxidative stress selectively inhibits the amidase activity which leads to a rapid increase in the amounts of intracellular Gsp and Gsp S-thiolated proteins (GspSSPs).

It carries out the reaction spermidine + glutathione + ATP = glutathionylspermidine + ADP + phosphate + H(+). The catalysed reaction is glutathionylspermidine + H2O = spermidine + glutathione. It functions in the pathway sulfur metabolism; glutathione metabolism. The protein operates within amine and polyamine metabolism; spermidine metabolism. With respect to regulation, when exposed to oxidative stress, Gsp amidase activity is transiently inhibited in vivo by oxidation of the catalytic Cys-59 thiol to sulfenic acid; this modification does not affect Gsp synthetase activity. Gsp amidase activity is negatively autoregulated by the Gsp synthetase domain, and is activated by the Gsp synthetase substrates, GSH and ATP-Mg(2+); the occupancy of the synthetase active site may initiate communication through the protein as manifest by the release of inhibition of the amidase activity. A tetrahedral phosphonate analog of glutathionylspermidine, designed as a mimic of the proposed tetrahedral intermediate for either reaction, inhibits the synthetase activity (Ki of 10 uM) but does not inhibit the amidase activity. Amidase activity is inhibited by iodoacetamide in vitro. Its function is as follows. Catalyzes the formation of an amide bond between glutathione (GSH) and spermidine coupled with hydrolysis of ATP; also catalyzes the opposing reaction, i.e. the hydrolysis of glutathionylspermidine (Gsp) back to glutathione and spermidine. The amidase active site can also hydrolyze Gsp-disulfide (Gsp-S-S-Gsp) to Gsp-SG and Gsp S-thiolated proteins (GspSSPs) to GSH S-thiolated protein (GSSPs). Likely acts synergistically with glutaredoxin to regulate the redox environment of E.coli and defend against oxidative damage. In vitro, the amidase active site also catalyzes hydrolysis of amide and ester derivatives of glutathione (e.g. glutathione ethyl ester and glutathione amide) but lacks activity toward acetylspermidine (N1 and N8) and acetylspermine (N1). This chain is Bifunctional glutathionylspermidine synthetase/amidase (gss), found in Escherichia coli (strain K12).